Reading from the N-terminus, the 154-residue chain is uncharacterized protein (154 aa).

The 137-residue stretch at 7–143 (RSELEKTAVQ…IFSFVGKAAD (137 aa)) folds into the HTH marR-type domain. A DNA-binding region (H-T-H motif) is located at residues 57 to 80 (AGELGKKTGLSTGSVTALVDRLEK).

This is an uncharacterized protein from Bacillus subtilis (strain 168).